A 369-amino-acid chain; its full sequence is MSDLRRIVIKVGSSSLNHPEGGLDDQAIQRIAGVIAGIRQLGVECVLVSSGAVAAGVGKLGLKTKPKDMAGKQAVAAVGQGVLIEKYALALEARGLVCAQVLLSRLDLAEASRYRNAQNTLEQLLRYQVIPIINENDTVAVEELCFGDNDRLSALVAGLVHGDLLVILTDVDGLYSANPKLNPQAELIEEVEDLTQVMHIAGGAGSSMGTGGMVTKLKAAEITTRFGMGMFLLHSKRMEEIIELIQGERPLGTYFFPAAHRIMGKKRWIAYGGLSEGSIFIDEGAVKALLKGKSLLASGITGIDGVWERKELVRINNPDGIEVARGLVELSSEELEKVRGKHSEEMLATIPNLEGEEVVHRDNMTLMIE.

Lys-10 provides a ligand contact to ATP. Substrate is bound by residues Ser-50, Asp-137, and Asn-149. ATP-binding positions include 169–170 (TD) and 210–216 (TGGMVTK). The 74-residue stretch at 276–349 (EGSIFIDEGA…GKHSEEMLAT (74 aa)) folds into the PUA domain.

Belongs to the glutamate 5-kinase family.

It localises to the cytoplasm. The enzyme catalyses L-glutamate + ATP = L-glutamyl 5-phosphate + ADP. It functions in the pathway amino-acid biosynthesis; L-proline biosynthesis; L-glutamate 5-semialdehyde from L-glutamate: step 1/2. Its function is as follows. Catalyzes the transfer of a phosphate group to glutamate to form L-glutamate 5-phosphate. The protein is Glutamate 5-kinase of Desulfitobacterium hafniense (strain Y51).